The chain runs to 490 residues: N-succinylglutamate 5-semialdehyde dehydrogenase (490 aa).

220 to 225 (GSANTG) is a binding site for NAD(+). Catalysis depends on residues Glu243 and Cys277.

This sequence belongs to the aldehyde dehydrogenase family. AstD subfamily.

It catalyses the reaction N-succinyl-L-glutamate 5-semialdehyde + NAD(+) + H2O = N-succinyl-L-glutamate + NADH + 2 H(+). It functions in the pathway amino-acid degradation; L-arginine degradation via AST pathway; L-glutamate and succinate from L-arginine: step 4/5. Functionally, catalyzes the NAD-dependent reduction of succinylglutamate semialdehyde into succinylglutamate. In Shigella dysenteriae serotype 1 (strain Sd197), this protein is N-succinylglutamate 5-semialdehyde dehydrogenase.